We begin with the raw amino-acid sequence, 570 residues long: Phytoene desaturase (570 aa).

A helical transmembrane segment spans residues 547–567 (LFQGFLGALVAILLAYYYLVI).

The protein belongs to the carotenoid/retinoid oxidoreductase family. It depends on NAD(+) as a cofactor.

It localises to the membrane. It carries out the reaction 15-cis-phytoene + A = all-trans-phytofluene + AH2. The enzyme catalyses all-trans-phytofluene + A = all-trans-zeta-carotene + AH2. The catalysed reaction is all-trans-zeta-carotene + A = all-trans-neurosporene + AH2. It catalyses the reaction all-trans-neurosporene + A = all-trans-lycopene + AH2. It functions in the pathway carotenoid biosynthesis. Functionally, phytoene desaturase; part of the car gene cluster that mediates the biosynthesis of neurosporaxanthin, a carboxylic apocarotenoid acting as an essential protective pigments and leading to orange pigmentation. Converts phytoene into lycopene via the intermediates phytofluene, zeta-carotene and neurosporene; and further desaturates gamma-carotene into torulene. Neurosporaxanthin is synthesized from geranyl-geranyl pyrophosphate (GGPP) through several enzymatic activities. Phytoene synthase activity performed by the bifunctional enzyme carAR first produces phytoene from geranyl-geranyl pyrophosphate (GGPP). The phytoene dehydrogenase carB then introduces 4 desaturations to lead to lycopene which is substrate of the carotene cyclase activity of carAR that leads to the production of gamma-carotene. CarB then performs a 5th desaturation reaction to yield torulene. Torulene is the substrate of the dioxidase carT that breaks the molecule, removing five carbon atoms to yield beta-apo-4'-carotenal, whereas the aldehyde dehydrogenase carD mediates the last step by converting beta-apo-4'-carotenal into neurosporaxanthin. This chain is Phytoene desaturase, found in Fusarium fujikuroi (Bakanae and foot rot disease fungus).